The sequence spans 179 residues: ATP synthase subunit delta (179 aa).

The protein belongs to the ATPase delta chain family. In terms of assembly, F-type ATPases have 2 components, F(1) - the catalytic core - and F(0) - the membrane proton channel. F(1) has five subunits: alpha(3), beta(3), gamma(1), delta(1), epsilon(1). F(0) has three main subunits: a(1), b(2) and c(10-14). The alpha and beta chains form an alternating ring which encloses part of the gamma chain. F(1) is attached to F(0) by a central stalk formed by the gamma and epsilon chains, while a peripheral stalk is formed by the delta and b chains.

The protein localises to the cell membrane. Its function is as follows. F(1)F(0) ATP synthase produces ATP from ADP in the presence of a proton or sodium gradient. F-type ATPases consist of two structural domains, F(1) containing the extramembraneous catalytic core and F(0) containing the membrane proton channel, linked together by a central stalk and a peripheral stalk. During catalysis, ATP synthesis in the catalytic domain of F(1) is coupled via a rotary mechanism of the central stalk subunits to proton translocation. This protein is part of the stalk that links CF(0) to CF(1). It either transmits conformational changes from CF(0) to CF(1) or is implicated in proton conduction. The polypeptide is ATP synthase subunit delta (Clostridium perfringens (strain SM101 / Type A)).